Here is a 302-residue protein sequence, read N- to C-terminus: (2S)-3-sulfopropanediol sulfolyase activating enzyme (302 aa).

The Radical SAM core domain maps to 19-301; that stretch reads HDGEGIRTLV…RLNIMLKSYE (283 aa). Cysteine 33, cysteine 37, cysteine 40, cysteine 59, cysteine 65, cysteine 68, cysteine 72, cysteine 91, cysteine 94, cysteine 97, and cysteine 101 together coordinate [4Fe-4S] cluster. Residue 39–41 participates in S-adenosyl-L-methionine binding; that stretch reads WCS. 4Fe-4S ferredoxin-type domains lie at 50 to 81 and 82 to 111; these read PERAYNPTRCLTAAVCGRCAKACPTGAVSIVG and GLVCFDRSKCTGCNACVRACPSGAQTVYGE. Residues glycine 141 and 190–192 contribute to the S-adenosyl-L-methionine site; that span reads DIK.

This sequence belongs to the organic radical-activating enzymes family. The cofactor is [4Fe-4S] cluster.

The enzyme catalyses glycyl-[protein] + reduced [flavodoxin] + S-adenosyl-L-methionine = glycin-2-yl radical-[protein] + semiquinone [flavodoxin] + 5'-deoxyadenosine + L-methionine + H(+). Its pathway is organosulfur degradation; alkanesulfonate degradation. Involved in the degradation of the organosulfur compound 2(S)-dihydroxypropanesulfonate (DHPS). Catalyzes activation of the (2S)-3-sulfopropanediol sulfolyase HpsG under anaerobic conditions by generation of an organic free radical on a glycine residue. This Bilophila wadsworthia (strain 3_1_6) protein is (2S)-3-sulfopropanediol sulfolyase activating enzyme.